The sequence spans 132 residues: Fatty acid-binding protein 12 (132 aa).

Residues R107 and 127–129 contribute to the a fatty acid site; that span reads RTY.

The protein belongs to the calycin superfamily. Fatty-acid binding protein (FABP) family. In terms of tissue distribution, highly expressed in adult retina and testis with lower levels in cerebral cortex, kidney and epididymis. In the retina, strongly expressed in the ganglion cell layer and throughout the inner nuclear layer in amacrine and bipolar cells. Not expressed in the outer nuclear layer. In the testis, detected in the seminiferous tubules.

May play a role in lipid transport. The protein is Fatty acid-binding protein 12 of Rattus norvegicus (Rat).